A 95-amino-acid polypeptide reads, in one-letter code: MALRPLHDRVIVKRLDNERKTASGIVIPDSAAEKPDQGEVVAVGPGKKTEDGKVLPVDLKAGDKVLFGKYAGQSVKVDGEELLVIREEEILAVIQ.

This sequence belongs to the GroES chaperonin family. As to quaternary structure, heptamer of 7 subunits arranged in a ring. Interacts with the chaperonin GroEL.

It is found in the cytoplasm. Functionally, together with the chaperonin GroEL, plays an essential role in assisting protein folding. The GroEL-GroES system forms a nano-cage that allows encapsulation of the non-native substrate proteins and provides a physical environment optimized to promote and accelerate protein folding. GroES binds to the apical surface of the GroEL ring, thereby capping the opening of the GroEL channel. The polypeptide is Co-chaperonin GroES (Bordetella petrii (strain ATCC BAA-461 / DSM 12804 / CCUG 43448)).